Reading from the N-terminus, the 481-residue chain is Pyruvate kinase (481 aa).

Substrate is bound at residue Arg-33. Positions 35, 37, 67, and 68 each coordinate K(+). 35-38 contributes to the ATP binding site; the sequence is NFSH. ATP is bound by residues Arg-74 and Lys-155. Glu-221 lines the Mg(2+) pocket. Positions 244, 245, and 277 each coordinate substrate. Asp-245 provides a ligand contact to Mg(2+).

Belongs to the pyruvate kinase family. Homotetramer. Mg(2+) serves as cofactor. The cofactor is K(+).

The catalysed reaction is pyruvate + ATP = phosphoenolpyruvate + ADP + H(+). It participates in carbohydrate degradation; glycolysis; pyruvate from D-glyceraldehyde 3-phosphate: step 5/5. The polypeptide is Pyruvate kinase (pyk) (Chlamydia muridarum (strain MoPn / Nigg)).